The following is a 185-amino-acid chain: Somatotropin (185 aa).

A disulfide bridge connects residues Cys52 and Cys158. Glu167 contacts Zn(2+). Cys175 and Cys183 form a disulfide bridge.

Belongs to the somatotropin/prolactin family.

The protein resides in the secreted. Growth hormone plays an important role in growth control and is involved in the regulation of several anabolic processes. Implicated as an osmoregulatory substance important for seawater adaptation. In Katsuwonus pelamis (Skipjack tuna), this protein is Somatotropin (gh).